The sequence spans 391 residues: Galactokinase (391 aa).

34 to 37 (EHTD) contributes to the substrate binding site. 121–127 (GAGLSSS) lines the ATP pocket. 2 residues coordinate Mg(2+): serine 127 and glutamate 159. Aspartate 171 acts as the Proton acceptor in catalysis. Residue tyrosine 220 participates in substrate binding.

This sequence belongs to the GHMP kinase family. GalK subfamily.

The protein resides in the cytoplasm. The catalysed reaction is alpha-D-galactose + ATP = alpha-D-galactose 1-phosphate + ADP + H(+). The protein operates within carbohydrate metabolism; galactose metabolism. Functionally, catalyzes the transfer of the gamma-phosphate of ATP to D-galactose to form alpha-D-galactose-1-phosphate (Gal-1-P). The protein is Galactokinase of Roseiflexus sp. (strain RS-1).